Here is a 126-residue protein sequence, read N- to C-terminus: Aspartate 1-decarboxylase (126 aa).

Residue Ser25 is the Schiff-base intermediate with substrate; via pyruvic acid of the active site. Ser25 is modified (pyruvic acid (Ser)). Thr57 contributes to the substrate binding site. Tyr58 functions as the Proton donor in the catalytic mechanism. 73–75 (GAA) contacts substrate.

This sequence belongs to the PanD family. As to quaternary structure, heterooctamer of four alpha and four beta subunits. Requires pyruvate as cofactor. Is synthesized initially as an inactive proenzyme, which is activated by self-cleavage at a specific serine bond to produce a beta-subunit with a hydroxyl group at its C-terminus and an alpha-subunit with a pyruvoyl group at its N-terminus.

It localises to the cytoplasm. It catalyses the reaction L-aspartate + H(+) = beta-alanine + CO2. It functions in the pathway cofactor biosynthesis; (R)-pantothenate biosynthesis; beta-alanine from L-aspartate: step 1/1. In terms of biological role, catalyzes the pyruvoyl-dependent decarboxylation of aspartate to produce beta-alanine. The sequence is that of Aspartate 1-decarboxylase from Psychrobacter sp. (strain PRwf-1).